Consider the following 100-residue polypeptide: Small ribosomal subunit protein uS14c (100 aa).

Belongs to the universal ribosomal protein uS14 family. Part of the 30S ribosomal subunit.

It localises to the plastid. The protein localises to the chloroplast. Its function is as follows. Binds 16S rRNA, required for the assembly of 30S particles. The sequence is that of Small ribosomal subunit protein uS14c from Chlorella vulgaris (Green alga).